Reading from the N-terminus, the 554-residue chain is Glutamine--tRNA ligase (554 aa).

The 'HIGH' region signature appears at 34–44 (PEPNGYLHIGH). Residues 35–37 (EPN) and 41–47 (HIGHAKS) contribute to the ATP site. 2 residues coordinate L-glutamine: Asp-67 and Tyr-212. Residues Thr-231, 261–262 (RL), and 269–271 (MSK) each bind ATP. Positions 268–272 (VMSKR) match the 'KMSKS' region motif. Residues 317 to 324 (TKQDNTIE) are interaction with tRNA.

This sequence belongs to the class-I aminoacyl-tRNA synthetase family. Monomer.

It localises to the cytoplasm. The enzyme catalyses tRNA(Gln) + L-glutamine + ATP = L-glutaminyl-tRNA(Gln) + AMP + diphosphate. In Escherichia coli O7:K1 (strain IAI39 / ExPEC), this protein is Glutamine--tRNA ligase.